We begin with the raw amino-acid sequence, 160 residues long: MATEKVFPMTLEGKAKLENELQELKTVKRKEVVERIKIARSFGDLSENSEYDSAKDEQAFVEGRITTIENMIRNAQIIDAAEAHNGLVTLGNTVTFIELPDGEEETYTIVGSAEADPFEGKISNDSPIAKGLLGHKEGEEVTIQTPAGDMNVKIEKITAS.

Positions 10–37 (TLEGKAKLENELQELKTVKRKEVVERIK) form a coiled coil.

Belongs to the GreA/GreB family.

Necessary for efficient RNA polymerase transcription elongation past template-encoded arresting sites. The arresting sites in DNA have the property of trapping a certain fraction of elongating RNA polymerases that pass through, resulting in locked ternary complexes. Cleavage of the nascent transcript by cleavage factors such as GreA or GreB allows the resumption of elongation from the new 3'terminus. GreA releases sequences of 2 to 3 nucleotides. This is Transcription elongation factor GreA from Listeria welshimeri serovar 6b (strain ATCC 35897 / DSM 20650 / CCUG 15529 / CIP 8149 / NCTC 11857 / SLCC 5334 / V8).